The following is a 182-amino-acid chain: Ribosome-recycling factor (182 aa).

It belongs to the RRF family.

The protein localises to the cytoplasm. Functionally, responsible for the release of ribosomes from messenger RNA at the termination of protein biosynthesis. May increase the efficiency of translation by recycling ribosomes from one round of translation to another. The sequence is that of Ribosome-recycling factor from Prochlorococcus marinus (strain MIT 9312).